A 398-amino-acid chain; its full sequence is Carbamoyl phosphate synthase large chain (398 aa).

In terms of domain architecture, ATP-grasp spans 1 to 187 (KLGVPQPEGG…LAKIAAKVIV (187 aa)). Residues 1–255 (KLGVPQPEGG…YKAELAADNV (255 aa)) form a carbamoyl phosphate synthetic domain region. Arg32, Asp71, Leu73, Glu78, Gly103, Val104, His105, Ser106, Gln146, and Glu158 together coordinate ATP. Mg(2+) contacts are provided by Gln146, Glu158, and Asn160. Mn(2+)-binding residues include Gln146, Glu158, and Asn160. One can recognise an MGS-like domain in the interval 254–395 (NVLPLTGKVF…NEYHKEMEEE (142 aa)). The interval 256-398 (LPLTGKVFLS…HKEMEEENKV (143 aa)) is allosteric domain.

It belongs to the CarB family. As to quaternary structure, composed of two chains; the small (or glutamine) chain promotes the hydrolysis of glutamine to ammonia, which is used by the large (or ammonia) chain to synthesize carbamoyl phosphate. Tetramer of heterodimers (alpha,beta)4. Requires Mg(2+) as cofactor. It depends on Mn(2+) as a cofactor.

The catalysed reaction is hydrogencarbonate + L-glutamine + 2 ATP + H2O = carbamoyl phosphate + L-glutamate + 2 ADP + phosphate + 2 H(+). The enzyme catalyses hydrogencarbonate + NH4(+) + 2 ATP = carbamoyl phosphate + 2 ADP + phosphate + 2 H(+). It functions in the pathway amino-acid biosynthesis; L-arginine biosynthesis; carbamoyl phosphate from bicarbonate: step 1/1. It participates in pyrimidine metabolism; UMP biosynthesis via de novo pathway; (S)-dihydroorotate from bicarbonate: step 1/3. Large subunit of the glutamine-dependent carbamoyl phosphate synthetase (CPSase). CPSase catalyzes the formation of carbamoyl phosphate from the ammonia moiety of glutamine, carbonate, and phosphate donated by ATP, constituting the first step of 2 biosynthetic pathways, one leading to arginine and/or urea and the other to pyrimidine nucleotides. The large subunit (synthetase) binds the substrates ammonia (free or transferred from glutamine from the small subunit), hydrogencarbonate and ATP and carries out an ATP-coupled ligase reaction, activating hydrogencarbonate by forming carboxy phosphate which reacts with ammonia to form carbamoyl phosphate. In Methanosarcina barkeri, this protein is Carbamoyl phosphate synthase large chain.